Consider the following 3088-residue polypeptide: Protein prune homolog 2 (3088 aa).

Residue Met1 is modified to N-acetylmethionine. The short motif at 109-111 is the DHH motif element; it reads GSS. Disordered regions lie at residues 433-468, 490-628, 673-759, 771-795, 846-909, 952-1080, 1192-1211, 1231-1371, 1413-1452, 1472-1491, 1515-1585, 1632-1698, 1741-1768, 1782-1813, 2089-2114, 2173-2215, 2240-2260, 2492-2542, 2589-2667, 2687-2710, 2814-2833, and 2841-2875; these read IRSS…GLDS, HFDL…EPAS, SSEQ…QGTN, SGRS…AAVA, SELL…PKTR, SNLG…SSYD, SDEH…NEKS, SFML…LVAS, RDVQ…GMNF, LEPE…SLDF, VKGS…QESE, DSFS…EESI, LDSS…DPWT, VEKE…KNED, ILTH…SEAK, YQAD…PDMA, QEPT…PESQ, SDLP…KNED, TQLA…SELG, ALEE…AGPD, QSEG…EIDI, and PDEA…AEEE. Residues 503 to 512 are compositionally biased toward low complexity; sequence SGQSQQSSHS. Over residues 562-582 the composition is skewed to basic and acidic residues; the sequence is SLVEHDEEFVQRQDSPRDNSE. Composition is skewed to polar residues over residues 613 to 625 and 673 to 684; these read MNSL…STEE and SSEQESVFQSPE. Basic and acidic residues predominate over residues 685-699; sequence SWKEHKPSSIDRRAS. Residues 750-759 are compositionally biased toward polar residues; sequence LPNTSPQGTN. Over residues 846 to 857 the composition is skewed to polar residues; it reads SELLDNSPSEIN. The segment covering 865–876 has biased composition (basic and acidic residues); sequence WGKKNNDSRDHI. Over residues 881 to 894 the composition is skewed to polar residues; sequence NPSSDLDHTWTNSK. Residues 895–909 show a composition bias toward basic and acidic residues; sequence PPKEDQNGLVDPKTR. Positions 964-977 are enriched in low complexity; the sequence is DTNYSTSDSYTSPT. The segment covering 980–1000 has biased composition (basic and acidic residues); the sequence is GDEKETEHKPFAKEEGFESKD. Polar residues-rich tracts occupy residues 1001-1027 and 1037-1048; these read GNST…SSGP and HTDNSSEINTTH. Basic and acidic residues-rich tracts occupy residues 1049 to 1062, 1192 to 1208, 1282 to 1293, 1314 to 1339, and 1425 to 1434; these read NLDE…HTDG, SDEH…HTLN, HLDKQDTERETL, DPWK…RGHL, and QPKDTHEKHL. Positions 1436-1450 are enriched in polar residues; sequence SQRNSGETTETSDGM. Residues 1537–1585 show a composition bias toward polar residues; sequence SSEYTHSSASSPELNDSSVALSSWGQQPSSGYQEENQGNWSEQNHQESE. The segment covering 1687 to 1698 has biased composition (acidic residues); that stretch reads SDDDSVGGEESI. A compositionally biased stretch (polar residues) spans 1752-1768; that stretch reads KSNPFCDNQQSSPDPWT. Composition is skewed to basic and acidic residues over residues 2516–2542 and 2604–2622; these read EKTI…KNED and NERK…DTRS. Residues 2623–2632 are compositionally biased toward polar residues; sequence SFESPAQDQS. Over residues 2823-2833 the composition is skewed to acidic residues; the sequence is DNLDSPDEIDI. A CRAL-TRIO domain is found at 2895–3056; sequence DMKVIEPYRR…SIIKLDEELR (162 aa).

The protein belongs to the PPase class C family. Prune subfamily. In terms of tissue distribution, a high level of expression seen in the nervous system (brain, cerebellum and spinal cord) as well as adrenal gland. Expressed at high levels in noneuroblastoma, rhabdomyosarcoma, melanoma and some osteosarcoma cell lines, whereas at only low levels in cancer cell lines of liver, breast, thyroid and colon. Expression is significantly higher in favorable tumors than aggressive ones.

The protein resides in the cytoplasm. May play an important role in regulating differentiation, survival and aggressiveness of the tumor cells. The chain is Protein prune homolog 2 (PRUNE2) from Homo sapiens (Human).